A 286-amino-acid polypeptide reads, in one-letter code: Ribosomal RNA small subunit methyltransferase A (286 aa).

Residues Asn-28, Leu-30, Gly-55, Glu-77, Asp-103, and Asn-123 each coordinate S-adenosyl-L-methionine.

This sequence belongs to the class I-like SAM-binding methyltransferase superfamily. rRNA adenine N(6)-methyltransferase family. RsmA subfamily.

It is found in the cytoplasm. The catalysed reaction is adenosine(1518)/adenosine(1519) in 16S rRNA + 4 S-adenosyl-L-methionine = N(6)-dimethyladenosine(1518)/N(6)-dimethyladenosine(1519) in 16S rRNA + 4 S-adenosyl-L-homocysteine + 4 H(+). Specifically dimethylates two adjacent adenosines (A1518 and A1519) in the loop of a conserved hairpin near the 3'-end of 16S rRNA in the 30S particle. May play a critical role in biogenesis of 30S subunits. This chain is Ribosomal RNA small subunit methyltransferase A, found in Bradyrhizobium sp. (strain BTAi1 / ATCC BAA-1182).